A 110-amino-acid chain; its full sequence is Nucleoid-associated protein CbuK_1603 (110 aa).

It belongs to the YbaB/EbfC family. As to quaternary structure, homodimer.

It localises to the cytoplasm. The protein localises to the nucleoid. In terms of biological role, binds to DNA and alters its conformation. May be involved in regulation of gene expression, nucleoid organization and DNA protection. This is Nucleoid-associated protein CbuK_1603 from Coxiella burnetii (strain CbuK_Q154) (Coxiella burnetii (strain Q154)).